The sequence spans 337 residues: Inositol 2-dehydrogenase (337 aa).

This sequence belongs to the Gfo/Idh/MocA family. As to quaternary structure, homotetramer.

The catalysed reaction is myo-inositol + NAD(+) = scyllo-inosose + NADH + H(+). In terms of biological role, involved in the oxidation of myo-inositol (MI) to 2-keto-myo-inositol (2KMI or 2-inosose). This is Inositol 2-dehydrogenase from Pseudarthrobacter chlorophenolicus (strain ATCC 700700 / DSM 12829 / CIP 107037 / JCM 12360 / KCTC 9906 / NCIMB 13794 / A6) (Arthrobacter chlorophenolicus).